The primary structure comprises 203 residues: ATP-dependent Clp protease proteolytic subunit (203 aa).

S107 functions as the Nucleophile in the catalytic mechanism. H132 is a catalytic residue.

Belongs to the peptidase S14 family. In terms of assembly, fourteen ClpP subunits assemble into 2 heptameric rings which stack back to back to give a disk-like structure with a central cavity, resembling the structure of eukaryotic proteasomes.

It is found in the cytoplasm. It carries out the reaction Hydrolysis of proteins to small peptides in the presence of ATP and magnesium. alpha-casein is the usual test substrate. In the absence of ATP, only oligopeptides shorter than five residues are hydrolyzed (such as succinyl-Leu-Tyr-|-NHMec, and Leu-Tyr-Leu-|-Tyr-Trp, in which cleavage of the -Tyr-|-Leu- and -Tyr-|-Trp bonds also occurs).. In terms of biological role, cleaves peptides in various proteins in a process that requires ATP hydrolysis. Has a chymotrypsin-like activity. Plays a major role in the degradation of misfolded proteins. In Shewanella frigidimarina (strain NCIMB 400), this protein is ATP-dependent Clp protease proteolytic subunit.